Here is a 356-residue protein sequence, read N- to C-terminus: MASSTAAVPFLAPPLEQLRHLAEELRSLLPRVRVGEAQETAEEFNREMFWRRLNEAAVKVNGEATVLTTHFSKLPWPSPQETQRICEQVRIAIEEIIIVYYSLPKDQGITLRKLVRNAALDIVDGMAQLLEVLLTAPSQSTENGDLISCNSVSVACQQVPEIPKDNKAAALLMLTKSVDFVKDAHEEMEQAVEECDPYSGLLNDSEDNSDSHSDEDGVLGLPSNRDSYWSEEDQELIIPCLALVRASRASLKKIRILVAENGKKDEVAQLDDIVDISDEISPSVDDLVLSIYPPVCHLTVRISSAKLVSVLIKALEITKASHVSPHPGDSWIPLLINAVDHCMNRIKALTQRAAEL.

Position 2 is an N-acetylalanine (alanine 2). 2 interaction with TCF3 regions span residues 2–181 (ASST…VDFV) and 147–356 (ISCN…AAEL). The interval 2–187 (ASSTAAVPFL…VDFVKDAHEE (186 aa)) is interaction with RPLP0. Residues 2–205 (ASSTAAVPFL…DPYSGLLNDS (204 aa)) form a required for interaction with CCND1 region. The tract at residues 198–224 (YSGLLNDSEDNSDSHSDEDGVLGLPSN) is disordered. The interval 236 to 356 (LIIPCLALVR…KALTQRAAEL (121 aa)) is interaction with RPLP0.

It belongs to the CCNDBP1 family. As to quaternary structure, interacts with CCND1 and GRAP2. May also interact with COPS5, RPLP0, SIRT6, SYF2 and TCF3. In terms of processing, phosphorylated. As to expression, expressed at high levels in brain, intestine, muscle and ovary and at lower levels in heart, kidney, liver, lung, spleen and testis.

The protein localises to the cytoplasm. It is found in the nucleus. Functionally, may negatively regulate cell cycle progression. May act at least in part via inhibition of the cyclin-D1/CDK4 complex, thereby preventing phosphorylation of RB1 and blocking E2F-dependent transcription. May be required for hepatocyte proliferation. This Mus musculus (Mouse) protein is Cyclin-D1-binding protein 1 (Ccndbp1).